Consider the following 153-residue polypeptide: MYKVQLLSCIALTLALLTSSAPTSSSTKETQEQLDQLLLDLQVLLKGVNDYKNSKLSRMLTFKFYMPKKVTELKHLQCLEEELKPLEEVLNLAQGKNSHGGNTRESISNINVTVLKLKGSETFMCEYDETVTIVEFLNRWITFCQSIISASSS.

The N-terminal stretch at 1–20 (MYKVQLLSCIALTLALLTSS) is a signal peptide. O-linked (GalNAc...) threonine glycosylation occurs at Thr23. Cys78 and Cys125 form a disulfide bridge. A glycan (N-linked (GlcNAc...) asparagine) is linked at Asn111.

The protein belongs to the IL-2 family.

It is found in the secreted. Its function is as follows. Cytokine produced by activated CD4-positive helper T-cells and to a lesser extend activated CD8-positive T-cells and natural killer (NK) cells that plays pivotal roles in the immune response and tolerance. Binds to a receptor complex composed of either the high-affinity trimeric IL-2R (IL2RA/CD25, IL2RB/CD122 and IL2RG/CD132) or the low-affinity dimeric IL-2R (IL2RB and IL2RG). Interaction with the receptor leads to oligomerization and conformation changes in the IL-2R subunits resulting in downstream signaling starting with phosphorylation of JAK1 and JAK3. In turn, JAK1 and JAK3 phosphorylate the receptor to form a docking site leading to the phosphorylation of several substrates including STAT5. This process leads to activation of several pathways including STAT, phosphoinositide-3-kinase/PI3K and mitogen-activated protein kinase/MAPK pathways. Functions as a T-cell growth factor and can increase NK-cell cytolytic activity as well. Promotes strong proliferation of activated B-cells and subsequently immunoglobulin production. Plays a pivotal role in regulating the adaptive immune system by controlling the survival and proliferation of regulatory T-cells, which are required for the maintenance of immune tolerance. Moreover, participates in the differentiation and homeostasis of effector T-cell subsets, including Th1, Th2, Th17 as well as memory CD8-positive T-cells. In Oryctolagus cuniculus (Rabbit), this protein is Interleukin-2 (IL2).